Here is a 260-residue protein sequence, read N- to C-terminus: Snake venom serine protease KN14 (260 aa).

Positions 1–18 are cleaved as a signal peptide; that stretch reads MVLIRVLANLLILQLSYA. A propeptide spanning residues 19 to 24 is cleaved from the precursor; sequence QKSSEL. The Peptidase S1 domain maps to 25–251; the sequence is VIGGDECNIN…HLDWIQSIIA (227 aa). Intrachain disulfides connect Cys31/Cys165, Cys100/Cys258, Cys144/Cys212, Cys176/Cys191, and Cys202/Cys227. His67 (charge relay system) is an active-site residue. Asn105 is a glycosylation site (N-linked (GlcNAc...) asparagine). The active-site Charge relay system is Asp112. An N-linked (GlcNAc...) asparagine glycan is attached at Asn172. Ser206 (charge relay system) is an active-site residue. N-linked (GlcNAc...) asparagine glycans are attached at residues Asn213 and Asn255.

It belongs to the peptidase S1 family. Snake venom subfamily. In terms of assembly, monomer. As to expression, expressed by the venom gland.

The protein resides in the secreted. Functionally, snake venom serine protease that may act in the hemostasis system of the prey. This Trimeresurus stejnegeri (Chinese green tree viper) protein is Snake venom serine protease KN14.